A 246-amino-acid polypeptide reads, in one-letter code: Aquaporin AqpM (246 aa).

The Cytoplasmic portion of the chain corresponds to 1-11 (MVSLTKRCIAE). Residues 12–32 (FIGTFILVFFGAGSAAVTLMI) form a helical membrane-spanning segment. Topologically, residues 33-55 (ASGGTSPNPFNIGIGLLGGLGDW) are extracellular. The chain crosses the membrane as a helical span at residues 56–76 (VAIGLAFGFAIAASIYALGNI). Topologically, residues 77 to 103 (SGCHINPAVTIGLWSVKKFPGREVVPY) are cytoplasmic. Residues 82 to 84 (NPA) carry the NPA 1 motif. Residues 104-124 (IIAQLLGAAFGSFIFLQCAGI) traverse the membrane as a helical segment. Over 125 to 145 (GAATVGGLGATAPFPGISYWQ) the chain is Extracellular. The helical transmembrane segment at 146–166 (AMLAEVVGTFLLMITIMGIAV) threads the bilayer. Residues 167–172 (DERAPK) are Cytoplasmic-facing. The helical transmembrane segment at 173–193 (GFAGIIIGLTVAGIITTLGNI) threads the bilayer. Residues 194 to 217 (SGSSLNPARTFGPYLNDMIFAGTN) are Extracellular-facing. An NPA 2 motif is present at residues 199–201 (NPA). A helical transmembrane segment spans residues 218–238 (LWNYYPIYVIGPIVGAVLAAL). Residues 239–246 (TYQYLTSE) lie on the Cytoplasmic side of the membrane.

It belongs to the MIP/aquaporin (TC 1.A.8) family. In terms of assembly, homotetramer.

The protein resides in the cell membrane. Functionally, channel that permits osmotically driven movement of water in both directions. It mediates rapid entry or exit of water in response to abrupt changes in osmolarity. Also exhibits a transient but reproducible increase in the initial glycerol flux. This is Aquaporin AqpM (aqpM) from Methanothermobacter marburgensis (strain ATCC BAA-927 / DSM 2133 / JCM 14651 / NBRC 100331 / OCM 82 / Marburg) (Methanobacterium thermoautotrophicum).